The following is a 503-amino-acid chain: Probable cytosol aminopeptidase (503 aa).

2 residues coordinate Mn(2+): Lys270 and Asp275. Lys282 is an active-site residue. Positions 293, 352, and 354 each coordinate Mn(2+). Arg356 is a catalytic residue.

It belongs to the peptidase M17 family. Mn(2+) serves as cofactor.

It localises to the cytoplasm. It catalyses the reaction Release of an N-terminal amino acid, Xaa-|-Yaa-, in which Xaa is preferably Leu, but may be other amino acids including Pro although not Arg or Lys, and Yaa may be Pro. Amino acid amides and methyl esters are also readily hydrolyzed, but rates on arylamides are exceedingly low.. The enzyme catalyses Release of an N-terminal amino acid, preferentially leucine, but not glutamic or aspartic acids.. In terms of biological role, presumably involved in the processing and regular turnover of intracellular proteins. Catalyzes the removal of unsubstituted N-terminal amino acids from various peptides. This Serratia proteamaculans (strain 568) protein is Probable cytosol aminopeptidase.